Consider the following 308-residue polypeptide: Ribonuclease Z (308 aa).

Zn(2+)-binding residues include His-61, His-63, Asp-65, His-66, His-139, Asp-210, and His-268. Asp-65 serves as the catalytic Proton acceptor.

This sequence belongs to the RNase Z family. Homodimer. Zn(2+) is required as a cofactor.

The catalysed reaction is Endonucleolytic cleavage of RNA, removing extra 3' nucleotides from tRNA precursor, generating 3' termini of tRNAs. A 3'-hydroxy group is left at the tRNA terminus and a 5'-phosphoryl group is left at the trailer molecule.. Zinc phosphodiesterase, which displays some tRNA 3'-processing endonuclease activity. Probably involved in tRNA maturation, by removing a 3'-trailer from precursor tRNA. The polypeptide is Ribonuclease Z (Halobacterium salinarum (strain ATCC 700922 / JCM 11081 / NRC-1) (Halobacterium halobium)).